Reading from the N-terminus, the 169-residue chain is E1B protein, small T-antigen (169 aa).

Belongs to the adenoviridae E1B 19 kDa protein family.

This is E1B protein, small T-antigen from Canine adenovirus serotype 1 (strain CLL) (CAdV-1).